The following is a 449-amino-acid chain: Sensor protein QseC (449 aa).

At 1–12 (MKFTQRLSLRVR) the chain is on the cytoplasmic side. The chain crosses the membrane as a helical span at residues 13–33 (LTLIFLILASVTWLLSSFVAW). Residues 34 to 156 (KQTTDNVDEL…QEWEYREDMA (123 aa)) are Periplasmic-facing. The helical transmembrane segment at 157–177 (LAIVAGQLIPWLVALPIMLII) threads the bilayer. Topologically, residues 178 to 449 (MMVLLGRELA…QGGFEAKVSW (272 aa)) are cytoplasmic. Residues 243-449 (DAAHELRSPL…QGGFEAKVSW (207 aa)) form the Histidine kinase domain. Residue histidine 246 is modified to Phosphohistidine; by autocatalysis.

The protein resides in the cell inner membrane. It catalyses the reaction ATP + protein L-histidine = ADP + protein N-phospho-L-histidine.. Member of a two-component regulatory system QseB/QseC. Activates the flagella regulon by activating transcription of FlhDC. May activate QseB by phosphorylation. The protein is Sensor protein QseC (qseC) of Escherichia coli (strain K12).